Reading from the N-terminus, the 81-residue chain is Small cysteine-rich protein 1 1 (81 aa).

The first 19 residues, 1–19 (MGVHFNICLLLLLVATISS), serve as a signal peptide directing secretion. Residues 20–39 (QTLKATEKDDSTDENPFGIY) constitute a propeptide that is removed on maturation.

It belongs to the Cnidaria small cysteine-rich protein (SCRiP) family. alpha subfamily. In terms of processing, the basic myotoxic domain of rattlesnake crotamine toxins (with 6 Cys residues) has been detected in this protein. However, this protein contains 2 additional Cys at the C-terminal region. Hence, this protein may contain 4 disulfide bonds instead of the 3 suggested by the myotoxin domain.

It localises to the secreted. Its subcellular location is the nematocyst. Induces neurotoxic symptoms on zebrafish. Has also been claimed to be implied in calcification, but tests on homolog proteins suggest that proteins of this family have a neurotoxic function and not a calcification function. This chain is Small cysteine-rich protein 1 1, found in Montipora capitata (Rice coral).